Here is a 618-residue protein sequence, read N- to C-terminus: COMPASS component cclA (618 aa).

A disordered region spans residues 1 to 91; it reads MSSIQPVGSS…KKAAVAPNSA (91 aa). Low complexity-rich tracts occupy residues 8 to 19 and 37 to 49; these read GSSGPSSNINSP and NARS…SNAS. The span at 57 to 69 shows a compositional bias: basic residues; sequence SKRNKRDSRKKRE. In terms of domain architecture, B30.2/SPRY spans 157–368; that stretch reads IADPGFPHIK…QSNVFSTKHL (212 aa). The interval 588 to 618 is disordered; it reads TLSVGHEGSPNPATPSAPLENTVPTEDVEMS.

The protein belongs to the cclA family. As to quaternary structure, component of the COMPASS complex.

It is found in the nucleus. It localises to the chromosome. The protein localises to the telomere. Component of the COMPASS (Set1C) complex that specifically mono-, di- and trimethylates histone H3 to form H3K4me1/2/3, which subsequently plays a role in telomere length maintenance and transcription elongation regulation. Controls the production of several secondary metabolites, including gliotoxin, but does not contribute to pathogenicity. The protein is COMPASS component cclA of Aspergillus fumigatus (strain ATCC MYA-4609 / CBS 101355 / FGSC A1100 / Af293) (Neosartorya fumigata).